The primary structure comprises 1372 residues: MNKVYSLKYCPVTGGLIAVSELARRVIKKTCRRLTHILLAGIPAICLCYSQISQAGIVRSDIAYQIYRDFAENKGLFVPGANDIPVYDKDGKLVGRLGKAPMADFSSVSSNGVATLVSPQYIVSVKHNGGYRSVSFGNGKNTYSLVDRNNHPSIDFHAPRLNKLVTEVIPSAVTSEGTKANAYKYTERYTAFYRVGSGTQYTKDKDGNLVKVAGGYAFKTGGTTGVPLISDATIVSNPGQTYNPVNGPLPDYGAPGDSGSPLFAYDKQQKKWVIVAVLRAYAGINGATNWWNVIPTDYLNQVMQDDFDAPVDFVSGLGPLNWTYDKTSGTGTLSQGSKNWTMHGQKDNDLNAGKNLVFSGQNGAIILKDSVTQGAGYLEFKDSYTVSAESGKTWTGAGIITDKGTNVTWKVNGVAGDNLHKLGEGTLTINGTGVNPGGLKTGDGIVVLNQQADTAGNIQAFSSVNLASGRPTVVLGDARQVNPDNISWGYRGGKLDLNGNAVTFTRLQAADYGAVITNNAQQKSQLLLDLKAQDTNVSEPTIGNISPFGGTGTPGNLYSMILNSQTRFYILKSASYGNTLWGNSLNDPAQWEFVGMNKNKAVQTVKDRILAGRAKQPVIFHGQLTGNMDVAIPQVPGGRKVIFDGSVNLPEGTLSQDSGTLIFQGHPVIHASISGSAPVSLNQKDWENRQFTMKTLSLKDADFHLSRNASLNSDIKSDNSHITLGSDRAFVDKNDGTGNYVIPEEGTSVPDTVNDRSQYEGNITLNHNSALDIGSRFTGGIDAYDSAVSITSPDVLLTAPGAFAGSSLTVHDGGHLTALNGLFSDGHIQAGKNGKITLSGTPVKDTANQYAPAVYLTDGYDLTGDNAALEITRGAHASGDIHASAASTVTIGSDTPAELASAETAASAFAGSLLEGYNAAFNGAITGGRADVSMHNALWTLGGDSAIHSLTVRNSRISSEGDRTFRTLTVNKLDATGSDFVLRTDLKNADKINVTEKATGSDNSLNVSFMNNPAQGQALNIPLVTAPAGTSAEMFKAGTRVTGFSRVTPTLHVDTSGGNTKWILDGFKAEADKAAAAKADSFMNAGYKNFMTEVNNLNKRMGDLRDTNGDAGAWARIMSGAGSADGGYSDNYTHVQVGFDKKHELDGVDLFTGVTMTYTDSSADSHAFSGKTKSVGGGLYASALFESGAYIDLIGKYIHHDNDYTGNFASLGTKHYNTHSWYAGAETGYRYHLTEDTFIEPQAELVYGAVSGKTFRWKDGDMDLSMKNRDFSPLVGRTGVELGKTFSGKDWSVTARAGTSWQFDLLNNGETVLRDASGEKRIKGEKDSRMLFNVGMNAQIKDNMRFGLEFEKSAFGKYNVDNAVNANFRYMF.

The first 55 residues, 1–55 (MNKVYSLKYCPVTGGLIAVSELARRVIKKTCRRLTHILLAGIPAICLCYSQISQA), serve as a signal peptide directing secretion. Residues 56–301 (GIVRSDIAYQ…NVIPTDYLNQ (246 aa)) enclose the Peptidase S6 domain. Active-site charge relay system residues include His127, Asp155, and Ser258. Residues 1106–1372 (DTNGDAGAWA…AVNANFRYMF (267 aa)) enclose the Autotransporter domain.

Post-translationally, cleaved to release the mature protein from the outer membrane.

The protein localises to the periplasm. It is found in the secreted. The protein resides in the cell surface. Its subcellular location is the cell outer membrane. Its function is as follows. Involved in intestinal colonization, displays in vitro mucinolytic activity, serum resistance, and hemagglutination. Important to penetrate the intestinal mucus layer. This is Serine protease pic autotransporter (pic) from Shigella flexneri.